A 469-amino-acid polypeptide reads, in one-letter code: Glutamine synthetase (469 aa).

A GS beta-grasp domain is found at 16 to 100 (EGVQYVDLRF…MICDIYDPVT (85 aa)). A GS catalytic domain is found at 108–469 (TRYIAQKAEQ…PKEFELYWDI (362 aa)). The Mg(2+) site is built by E133 and E135. Residue E207 coordinates ATP. Residues E212 and E220 each contribute to the Mg(2+) site. Residues 264–265 (NG) and G265 each bind L-glutamate. H269 is a binding site for Mg(2+). Residues 271–273 (HFS) and S273 contribute to the ATP site. L-glutamate contacts are provided by R321, E327, and R339. R339, R344, and K353 together coordinate ATP. Residue E358 participates in Mg(2+) binding. Position 360 (R360) interacts with L-glutamate. The residue at position 398 (Y398) is an O-AMP-tyrosine.

Belongs to the glutamine synthetase family. As to quaternary structure, oligomer of 12 subunits arranged in the form of two hexagons. Mg(2+) is required as a cofactor.

The protein localises to the cytoplasm. It carries out the reaction L-glutamate + NH4(+) + ATP = L-glutamine + ADP + phosphate + H(+). The activity of this enzyme could be controlled by adenylation under conditions of abundant glutamine. Functionally, catalyzes the ATP-dependent biosynthesis of glutamine from glutamate and ammonia. The sequence is that of Glutamine synthetase from Aquifex aeolicus (strain VF5).